We begin with the raw amino-acid sequence, 504 residues long: Probable cytochrome P450 6a21 (504 aa).

Cys449 is a heme binding site.

It belongs to the cytochrome P450 family. Requires heme as cofactor.

Its subcellular location is the endoplasmic reticulum membrane. It localises to the microsome membrane. May be involved in the metabolism of insect hormones and in the breakdown of synthetic insecticides. The polypeptide is Probable cytochrome P450 6a21 (Cyp6a21) (Drosophila melanogaster (Fruit fly)).